A 420-amino-acid polypeptide reads, in one-letter code: RING finger protein 39 (420 aa).

The RING-type zinc finger occupies 88–135 (CPLCGGSFEDPVLLACEHSFCRACLARRWGTPPATDTEASPTACPCCG). 2 disordered regions span residues 166-186 (PGAR…CLDP) and 246-265 (DRRS…DGPK). Residues 210–420 (DDLPEDYPVV…APLRIVPAES (211 aa)) enclose the B30.2/SPRY domain.

It localises to the cytoplasm. It carries out the reaction S-ubiquitinyl-[E2 ubiquitin-conjugating enzyme]-L-cysteine + [acceptor protein]-L-lysine = [E2 ubiquitin-conjugating enzyme]-L-cysteine + N(6)-ubiquitinyl-[acceptor protein]-L-lysine.. It participates in protein modification; protein ubiquitination. Functionally, plays an inhibitory role in anti-RNA viral innate immunity by targeting the adapter DDX3X and promoting its 'Lys-48'-linked polyubiquitination. Alternatively, enhances the cGAS-STING pathway activation by promoting 'Lys-63'-linked ubiquitination of STING1, facilitating the STING1-TBK1 complex formation and STING1 activation. This is RING finger protein 39 (RNF39) from Macaca mulatta (Rhesus macaque).